The primary structure comprises 385 residues: MGDEAEIKEHLKPQASSETMDKKHNVKGKRLWQKVKYQLVEFHSLPAYLRDNEYIIGHYRSEWPIKQILLSIFTIHNETLNVWTHLIGFFLFLALTIYTATKVPSVVDLHSLQHRLPDLLRKTDLHKLHSELMARLPSSPSSWHVMDLLYNCLPERFSHGNYTDMCVLHSVREDLANLIAPLIFRPITRWPFYAFLGGAMFCLLASSTCHLLSCHSERVSYIMLRLDYAGIAALIATSFYPPVYYSFMCDPFFCNLYLGFITILGIATVLVSLLPVFQSPEFRVVRASLFFGMGFSGLAPILHKLIIFWDQPEALHTTGYEILMGLLYGLGALVYATRIPERWMPGKFDIAGHSHQLFHVLVVAGAFTHYRAGLVYLKWRDIEGC.

The span at 1 to 12 (MGDEAEIKEHLK) shows a compositional bias: basic and acidic residues. The disordered stretch occupies residues 1-22 (MGDEAEIKEHLKPQASSETMDK). The Cytoplasmic portion of the chain corresponds to 1-79 (MGDEAEIKEH…LSIFTIHNET (79 aa)). The helical transmembrane segment at 80–100 (LNVWTHLIGFFLFLALTIYTA) threads the bilayer. The Extracellular portion of the chain corresponds to 101-191 (TKVPSVVDLH…LIFRPITRWP (91 aa)). The chain crosses the membrane as a helical span at residues 192–212 (FYAFLGGAMFCLLASSTCHLL). Residues 213 to 228 (SCHSERVSYIMLRLDY) lie on the Cytoplasmic side of the membrane. A helical transmembrane segment spans residues 229 to 249 (AGIAALIATSFYPPVYYSFMC). The Extracellular portion of the chain corresponds to 250-256 (DPFFCNL). A helical membrane pass occupies residues 257-277 (YLGFITILGIATVLVSLLPVF). Topologically, residues 278–288 (QSPEFRVVRAS) are cytoplasmic. The chain crosses the membrane as a helical span at residues 289 to 309 (LFFGMGFSGLAPILHKLIIFW). Over 310–313 (DQPE) the chain is Extracellular. The helical transmembrane segment at 314–334 (ALHTTGYEILMGLLYGLGALV) threads the bilayer. Residues 335–356 (YATRIPERWMPGKFDIAGHSHQ) lie on the Cytoplasmic side of the membrane. The chain crosses the membrane as a helical span at residues 357–377 (LFHVLVVAGAFTHYRAGLVYL).

The protein belongs to the ADIPOR family. Expressed in roots, leaves, stems and flowers.

It localises to the membrane. May play a role in abiotic stress response. In Arabidopsis thaliana (Mouse-ear cress), this protein is Heptahelical transmembrane protein 4 (HHP4).